We begin with the raw amino-acid sequence, 553 residues long: Zinc finger protein 324A (553 aa).

One can recognise a KRAB domain in the interval 1-72 (MAFEDVAVYF…SGTDTTLSRT (72 aa)). A Nuclear localization signal motif is present at residues 130 to 135 (PSRERK). The segment at 186–221 (GRQPRTPERQKPCAQEVPGRTFGSAQDLEAAGGRGH) is disordered. C2H2-type zinc fingers lie at residues 257 to 279 (FECRACSKVFVKSSDLLKHLRTH), 285 to 307 (YECAQCGKAFSQTSHLTQHQRIH), 313 to 335 (YACPVCGKAFRHSSSLVRHQRIH), 341 to 363 (FRCSECGKAFSHGSNLSQHRKIH), 369 to 391 (YACAQCGRRFCRNSHLIQHERTH), 397 to 419 (FVCALCGAAFSQGSSLFKHQRVH), 425 to 447 (FACPQCGRAFSHSSNLTQHQLLH), 453 to 475 (FRCVDCGKAFAKGAVLLSHRRIH), and 481 to 503 (FVCTQCGRAFRERPALFHHQRIH). Residues 502–553 (IHTGEKTVRRSRASLHPQARSVAGASSEGAPAKETEPTPASGPAAVSQPAEV) are disordered.

It belongs to the krueppel C2H2-type zinc-finger protein family. In terms of tissue distribution, expressed at high levels in the spleen, thymus, and PBMC, at low levels in the prostate, ovary, small intestine, colon (mucosal lining), placenta, lung, and pancreas, and very weakly expressed in the liver and kidney.

Its subcellular location is the nucleus. May be involved in transcriptional regulation. May be involved in regulation of cell proliferation. This chain is Zinc finger protein 324A (ZNF324), found in Homo sapiens (Human).